Here is a 356-residue protein sequence, read N- to C-terminus: 4-hydroxy-3-methylbut-2-en-1-yl diphosphate synthase (flavodoxin) (356 aa).

[4Fe-4S] cluster contacts are provided by C264, C267, C299, and E306.

It belongs to the IspG family. Requires [4Fe-4S] cluster as cofactor.

The enzyme catalyses (2E)-4-hydroxy-3-methylbut-2-enyl diphosphate + oxidized [flavodoxin] + H2O + 2 H(+) = 2-C-methyl-D-erythritol 2,4-cyclic diphosphate + reduced [flavodoxin]. Its pathway is isoprenoid biosynthesis; isopentenyl diphosphate biosynthesis via DXP pathway; isopentenyl diphosphate from 1-deoxy-D-xylulose 5-phosphate: step 5/6. In terms of biological role, converts 2C-methyl-D-erythritol 2,4-cyclodiphosphate (ME-2,4cPP) into 1-hydroxy-2-methyl-2-(E)-butenyl 4-diphosphate. The sequence is that of 4-hydroxy-3-methylbut-2-en-1-yl diphosphate synthase (flavodoxin) from Campylobacter lari (strain RM2100 / D67 / ATCC BAA-1060).